Reading from the N-terminus, the 582-residue chain is Pescadillo homolog (582 aa).

Residues 277 to 329 adopt a coiled-coil conformation; that stretch reads LSALSASLARVVATVEEEENQLDNFPTEEEDQENMQAREKEQKEQEAQKRLFE. The span at 294–309 shows a compositional bias: acidic residues; sequence EENQLDNFPTEEEDQE. A disordered region spans residues 294–317; it reads EENQLDNFPTEEEDQENMQAREKE. The region spanning 323–416 is the BRCT domain; that stretch reads AQKRLFEGLK…MRLPVEDYFL (94 aa). Residues 445–454 are compositionally biased toward basic and acidic residues; that stretch reads ALQRGEKPVQ. Disordered stretches follow at residues 445-511 and 554-582; these read ALQR…ETGS and REVN…AKKQ. The segment covering 455 to 477 has biased composition (acidic residues); the sequence is EEDEEEEDEDEEEDDDVDDEEFT. A compositionally biased stretch (basic and acidic residues) spans 478–490; the sequence is EEKNLKKMEDTRA. The stretch at 517–582 forms a coiled coil; sequence RLEQEEKAEE…QKKQKKAKKQ (66 aa). A compositionally biased stretch (basic residues) spans 572–582; that stretch reads AQKKQKKAKKQ.

Belongs to the pescadillo family. In terms of assembly, component of the PeBoW complex, composed of bop1, pes1 and wdr12. The complex is held together by bop1, which interacts with pes1 via its N-terminal domain and with wdr12 via a high-affinity interaction between the seven-bladed beta-propeller domains of the 2 proteins. The PeBoW complex associates with the 66S pre-ribosome.

The protein localises to the nucleus. It is found in the nucleolus. The protein resides in the nucleoplasm. Its function is as follows. Component of the PeBoW complex, which is required for maturation of 28S and 5.8S ribosomal RNAs and formation of the 60S ribosome. In Salmo salar (Atlantic salmon), this protein is Pescadillo homolog (pes1).